A 649-amino-acid chain; its full sequence is Acetyl-coenzyme A synthetase (649 aa).

Residues 189 to 192 (RGGK), Thr-311, and Asn-335 each bind CoA. ATP-binding positions include 387–389 (GEP), 411–416 (DTWWQT), Asp-500, and Arg-515. Ser-523 contributes to the CoA binding site. Arg-526 is an ATP binding site. Positions 537, 539, and 542 each coordinate Mg(2+). Position 584 (Arg-584) interacts with CoA. An N6-acetyllysine modification is found at Lys-609.

The protein belongs to the ATP-dependent AMP-binding enzyme family. Mg(2+) is required as a cofactor. Acetylated. Deacetylation by the SIR2-homolog deacetylase activates the enzyme.

The catalysed reaction is acetate + ATP + CoA = acetyl-CoA + AMP + diphosphate. Functionally, catalyzes the conversion of acetate into acetyl-CoA (AcCoA), an essential intermediate at the junction of anabolic and catabolic pathways. AcsA undergoes a two-step reaction. In the first half reaction, AcsA combines acetate with ATP to form acetyl-adenylate (AcAMP) intermediate. In the second half reaction, it can then transfer the acetyl group from AcAMP to the sulfhydryl group of CoA, forming the product AcCoA. The chain is Acetyl-coenzyme A synthetase from Sinorhizobium medicae (strain WSM419) (Ensifer medicae).